Here is a 130-residue protein sequence, read N- to C-terminus: Large ribosomal subunit protein bL17 (130 aa).

This sequence belongs to the bacterial ribosomal protein bL17 family. Part of the 50S ribosomal subunit. Contacts protein L32.

In Pectobacterium atrosepticum (strain SCRI 1043 / ATCC BAA-672) (Erwinia carotovora subsp. atroseptica), this protein is Large ribosomal subunit protein bL17.